A 135-amino-acid polypeptide reads, in one-letter code: uncharacterized protein (135 aa).

This is an uncharacterized protein from Magallana gigas (Pacific oyster).